The sequence spans 189 residues: GTPase KRas (189 aa).

Residue M1 is modified to N-acetylmethionine; in GTPase KRas; alternate. Residue T2 is modified to N-acetylthreonine; in GTPase KRas, N-terminally processed. GTP is bound by residues 10 to 18 (GAGGVGKSA), 29 to 35 (VDEYDPT), and 59 to 60 (AG). The short motif at 32-40 (YDPTIEDSY) is the Effector region element. T35 carries a (Microbial infection) O-linked (Glc) threonine; by P.sordellii toxin TcsL glycan. An N6-acetyllysine modification is found at K104. 116-119 (NKCD) serves as a coordination point for GTP. The segment at 166–185 (YRLKKISKEEKTPGCVKIKK) is hypervariable region. K170 is covalently cross-linked (Glycyl lysine isopeptide (Lys-Gly) (interchain with G-Cter in ubiquitin)). Residue C180 is the site of S-palmitoyl cysteine attachment. 3 N6-palmitoyl lysine lipidation sites follow: K182, K184, and K185. Residue C186 is modified to Cysteine methyl ester. The S-farnesyl cysteine moiety is linked to residue C186. Residues 187-189 (IIM) constitute a propeptide, removed in mature form.

The protein belongs to the small GTPase superfamily. Ras family. As to quaternary structure, interacts with PHLPP. Interacts (active GTP-bound form preferentially) with RGS14. Interacts (when farnesylated) with PDE6D; this promotes dissociation from the cell membrane. Interacts with SOS1. Interacts (when farnesylated) with GPR31. Interacts with RAP1GDS1. Interacts (active GTP-bound form) with both SHOC2 and PP1c (all isoforms) to form a tertiary complex; SHOC2 and PP1c preferably bind M-Ras/MRAS, but they also bind K-Ras/KRAS, N-Ras/NRAS and H-Ras/HRAS. Interacts (GTP-bound form) with MAPKAP1/SIN1; inhibiting K-Ras/KRAS activity. Interacts with GPR31; in a farnelysation-dependent manner. In terms of processing, acetylation at Lys-104 prevents interaction with guanine nucleotide exchange factors (GEFs). Post-translationally, palmitoylated at Lys-182, Lys-184 and Lys-185. Palmitoylation on lysine residues is promoted by palmitoylation at Cys-180. Lysine-depalmitoylation by SIRT2 promotes its localization to endomembranes in endocytic pathways. Ubiquitinated by the BCR(LZTR1) E3 ubiquitin ligase complex at Lys-170 in a non-degradative manner, leading to inhibit Ras signaling by decreasing Ras association with membranes. In terms of processing, (Microbial infection) Glucosylated at Thr-35 by P.sordellii toxin TcsL.

It is found in the cell membrane. The protein resides in the endomembrane system. Its subcellular location is the cytoplasm. It localises to the cytosol. The enzyme catalyses GTP + H2O = GDP + phosphate + H(+). Alternates between an inactive form bound to GDP and an active form bound to GTP. Activated by a guanine nucleotide-exchange factor (GEF) and inactivated by a GTPase-activating protein (GAP). Interaction with SOS1 promotes exchange of bound GDP to GTP. In terms of biological role, ras proteins bind GDP/GTP and possess intrinsic GTPase activity. Plays an important role in the regulation of cell proliferation. Plays a role in promoting oncogenic events by inducing transcriptional silencing of tumor suppressor genes (TSGs) in colorectal cancer (CRC) cells in a ZNF304-dependent manner. The polypeptide is GTPase KRas (KRAS) (Homo sapiens (Human)).